The chain runs to 433 residues: Glutamate-1-semialdehyde 2,1-aminomutase (433 aa).

Lys-271 is subject to N6-(pyridoxal phosphate)lysine.

This sequence belongs to the class-III pyridoxal-phosphate-dependent aminotransferase family. HemL subfamily. Homodimer. It depends on pyridoxal 5'-phosphate as a cofactor.

Its subcellular location is the cytoplasm. The enzyme catalyses (S)-4-amino-5-oxopentanoate = 5-aminolevulinate. The protein operates within porphyrin-containing compound metabolism; protoporphyrin-IX biosynthesis; 5-aminolevulinate from L-glutamyl-tRNA(Glu): step 2/2. It participates in porphyrin-containing compound metabolism; chlorophyll biosynthesis. This chain is Glutamate-1-semialdehyde 2,1-aminomutase, found in Prochlorococcus marinus (strain AS9601).